A 205-amino-acid polypeptide reads, in one-letter code: Large ribosomal subunit protein uL4 (205 aa).

It belongs to the universal ribosomal protein uL4 family. As to quaternary structure, part of the 50S ribosomal subunit.

One of the primary rRNA binding proteins, this protein initially binds near the 5'-end of the 23S rRNA. It is important during the early stages of 50S assembly. It makes multiple contacts with different domains of the 23S rRNA in the assembled 50S subunit and ribosome. Functionally, forms part of the polypeptide exit tunnel. In Ruegeria sp. (strain TM1040) (Silicibacter sp.), this protein is Large ribosomal subunit protein uL4.